Here is a 115-residue protein sequence, read N- to C-terminus: Nascent polypeptide-associated complex protein (115 aa).

The region spanning 6–72 (PMNPKQLKKL…SEEEKAIINI (67 aa)) is the NAC-A/B domain.

It belongs to the NAC-alpha family. As to quaternary structure, homodimer. Interacts with the ribosome. Binds ribosomal RNA.

Contacts the emerging nascent chain on the ribosome. In Pyrococcus horikoshii (strain ATCC 700860 / DSM 12428 / JCM 9974 / NBRC 100139 / OT-3), this protein is Nascent polypeptide-associated complex protein.